Consider the following 327-residue polypeptide: Biotin synthase (327 aa).

One can recognise a Radical SAM core domain in the interval 49 to 275 (RFGREVSLCS…VNPHAEVRMA (227 aa)). Residues Cys-67, Cys-71, and Cys-74 each contribute to the [4Fe-4S] cluster site. The [2Fe-2S] cluster site is built by Ser-112, Cys-143, Cys-203, and Arg-273.

This sequence belongs to the radical SAM superfamily. Biotin synthase family. In terms of assembly, homodimer. The cofactor is [4Fe-4S] cluster. [2Fe-2S] cluster serves as cofactor.

It catalyses the reaction (4R,5S)-dethiobiotin + (sulfur carrier)-SH + 2 reduced [2Fe-2S]-[ferredoxin] + 2 S-adenosyl-L-methionine = (sulfur carrier)-H + biotin + 2 5'-deoxyadenosine + 2 L-methionine + 2 oxidized [2Fe-2S]-[ferredoxin]. The protein operates within cofactor biosynthesis; biotin biosynthesis; biotin from 7,8-diaminononanoate: step 2/2. Functionally, catalyzes the conversion of dethiobiotin (DTB) to biotin by the insertion of a sulfur atom into dethiobiotin via a radical-based mechanism. This chain is Biotin synthase, found in Maridesulfovibrio salexigens (strain ATCC 14822 / DSM 2638 / NCIMB 8403 / VKM B-1763) (Desulfovibrio salexigens).